Reading from the N-terminus, the 92-residue chain is Sperm-specific protein Phi-1 (92 aa).

A disordered region spans residues 1 to 92 (MPSPTRRSSK…RVRAKKKKKK (92 aa)). Composition is skewed to basic residues over residues 7-19 (RSSKSRSKSRSRS) and 29-92 (AAKR…KKKK).

In terms of tissue distribution, sperm.

The protein localises to the nucleus. The protein resides in the chromosome. Functionally, involved in nuclear basic protein transition: histones are replaced by spermatid specific proteins which are themselves replaced by protamines in late spermatids. This is Sperm-specific protein Phi-1 from Mytilus edulis (Blue mussel).